Consider the following 302-residue polypeptide: Probable phytol kinase 1, chloroplastic (302 aa).

Residues 1 to 57 constitute a chloroplast transit peptide; the sequence is MTLLSSHLLVFSAVHHRAPPTTTTRNSPTTNHTVRFLCSPGVPPAVRLDQRLPRFVV. Transmembrane regions (helical) follow at residues 65–83, 103–123, 128–148, 164–184, 189–209, 232–252, and 263–283; these read LLYNAGATVGVLGGGYALV, LVHILSGLLFLVSWPIFSNSP, FAAFVPLVNCLRLLVNGLSLA, LELLRGPLYYVLILILSALVF, PIGVISLAMMCAGDGIADIIG, LVFGFLVSIGMLYYYSVLGHV, and VAFISFVATLVESLPITKVVD.

The protein belongs to the polyprenol kinase family.

It is found in the plastid. It localises to the chloroplast membrane. It catalyses the reaction phytol + CTP = phytyl phosphate + CDP + H(+). It functions in the pathway cofactor biosynthesis; tocopherol biosynthesis. Its function is as follows. Involved in the activation and reutilization of phytol from chlorophyll degradation in plant metabolism, including tocopherol biosynthesis. Catalyzes the conversion of phytol to phytol monophosphate (PMP). This Glycine max (Soybean) protein is Probable phytol kinase 1, chloroplastic.